Consider the following 364-residue polypeptide: Chorismate synthase (364 aa).

An NADP(+)-binding site is contributed by Arg48. Residues Arg125–Ser127, Asn237–Ala238, Gly277, Lys292–Ser296, and Arg318 contribute to the FMN site.

This sequence belongs to the chorismate synthase family. In terms of assembly, homotetramer. It depends on FMNH2 as a cofactor.

It carries out the reaction 5-O-(1-carboxyvinyl)-3-phosphoshikimate = chorismate + phosphate. It functions in the pathway metabolic intermediate biosynthesis; chorismate biosynthesis; chorismate from D-erythrose 4-phosphate and phosphoenolpyruvate: step 7/7. In terms of biological role, catalyzes the anti-1,4-elimination of the C-3 phosphate and the C-6 proR hydrogen from 5-enolpyruvylshikimate-3-phosphate (EPSP) to yield chorismate, which is the branch point compound that serves as the starting substrate for the three terminal pathways of aromatic amino acid biosynthesis. This reaction introduces a second double bond into the aromatic ring system. The polypeptide is Chorismate synthase (Albidiferax ferrireducens (strain ATCC BAA-621 / DSM 15236 / T118) (Rhodoferax ferrireducens)).